A 150-amino-acid polypeptide reads, in one-letter code: Transcriptional repressor NrdR (150 aa).

The segment at 3–34 (CPFCNFEESKVVDSRATDDNTTIRRRRECLNC) is a zinc-finger region. Positions 49–139 (VLVVKKDLAR…VYRQFKDINT (91 aa)) constitute an ATP-cone domain.

The protein belongs to the NrdR family. Zn(2+) is required as a cofactor.

In terms of biological role, negatively regulates transcription of bacterial ribonucleotide reductase nrd genes and operons by binding to NrdR-boxes. The polypeptide is Transcriptional repressor NrdR (Clostridium botulinum (strain Eklund 17B / Type B)).